The sequence spans 92 residues: Ribonuclease P protein component 1 (92 aa).

It belongs to the eukaryotic/archaeal RNase P protein component 1 family. Consists of a catalytic RNA component and at least 4-5 protein subunits.

The protein localises to the cytoplasm. It catalyses the reaction Endonucleolytic cleavage of RNA, removing 5'-extranucleotides from tRNA precursor.. Functionally, part of ribonuclease P, a protein complex that generates mature tRNA molecules by cleaving their 5'-ends. This Staphylothermus marinus (strain ATCC 43588 / DSM 3639 / JCM 9404 / F1) protein is Ribonuclease P protein component 1.